The following is a 203-amino-acid chain: ESCRT-related protein CHMP1B (203 aa).

2 coiled-coil regions span residues 13 to 51 (DLKF…MDGA) and 109 to 140 (GNLQ…NAMA). The disordered stretch occupies residues 172-203 (PQPAGHAIPTKTEEKVDEDDLSRRLAELKARG). The segment covering 192-203 (LSRRLAELKARG) has biased composition (basic and acidic residues).

The protein belongs to the SNF7 family. In terms of assembly, interacts with CHMP1A and LIP5. Interacts with VPS2.2.

Its subcellular location is the cytoplasm. The protein localises to the endosome membrane. Its function is as follows. Involved in ESCRT-dependent multivesicular body (MVB) formation and sorting of endosomal cargo proteins into MVBs. Mediates the MVB sorting of the auxin carriers PIN1, PIN2 and AUX1. Required for embryonic axis establishment and seedling growth. Required for autophagic degradation of plastid proteins. Promotes the efficient sequestration of cargo from plastids into autophagosomes. Mediates the efficient delivery of autophagic plastid bodies to the vacuole, but not into the cytoplasm. This Arabidopsis thaliana (Mouse-ear cress) protein is ESCRT-related protein CHMP1B.